Here is a 206-residue protein sequence, read N- to C-terminus: Putative 3-methyladenine DNA glycosylase (206 aa).

It belongs to the DNA glycosylase MPG family.

The sequence is that of Putative 3-methyladenine DNA glycosylase from Staphylococcus carnosus (strain TM300).